The chain runs to 396 residues: Elongation factor Tu 2 (396 aa).

One can recognise a tr-type G domain in the interval 10 to 206 (KLHVNVGTIG…ALDTFIPDPT (197 aa)). Residues 19 to 26 (GHVDHGKT) form a G1 region. 19 to 26 (GHVDHGKT) contributes to the GTP binding site. Threonine 26 is a binding site for Mg(2+). The G2 stretch occupies residues 60–64 (GITIS). Residues 81-84 (DCPG) form a G3 region. Residues 81 to 85 (DCPGH) and 136 to 139 (NKAD) contribute to the GTP site. Residues 136 to 139 (NKAD) form a G4 region. Residues 174–176 (SAR) are G5.

The protein belongs to the TRAFAC class translation factor GTPase superfamily. Classic translation factor GTPase family. EF-Tu/EF-1A subfamily. Monomer.

It is found in the cytoplasm. The enzyme catalyses GTP + H2O = GDP + phosphate + H(+). Its function is as follows. GTP hydrolase that promotes the GTP-dependent binding of aminoacyl-tRNA to the A-site of ribosomes during protein biosynthesis. The polypeptide is Elongation factor Tu 2 (Xanthomonas campestris pv. campestris (strain 8004)).